Here is a 141-residue protein sequence, read N- to C-terminus: MSGNIGANPINNWNLLPLICLLSGCHFYRERFAERGFFYKVPDVLRDYLSAIPLEINEKARYKPGIANYHNIITCGFSTLLPYIRQQPLAMQQRFNLLFPDFVDHIQSPLPLASTLLERITFYAKKNRDELDKISCKWCCD.

This is an uncharacterized protein from Escherichia coli (strain K12).